Here is a 245-residue protein sequence, read N- to C-terminus: Phosphoribosylaminoimidazole-succinocarboxamide synthase (245 aa).

The protein belongs to the SAICAR synthetase family.

It carries out the reaction 5-amino-1-(5-phospho-D-ribosyl)imidazole-4-carboxylate + L-aspartate + ATP = (2S)-2-[5-amino-1-(5-phospho-beta-D-ribosyl)imidazole-4-carboxamido]succinate + ADP + phosphate + 2 H(+). It participates in purine metabolism; IMP biosynthesis via de novo pathway; 5-amino-1-(5-phospho-D-ribosyl)imidazole-4-carboxamide from 5-amino-1-(5-phospho-D-ribosyl)imidazole-4-carboxylate: step 1/2. The sequence is that of Phosphoribosylaminoimidazole-succinocarboxamide synthase from Nostoc punctiforme (strain ATCC 29133 / PCC 73102).